The chain runs to 336 residues: 4-hydroxy-3-methylbut-2-enyl diphosphate reductase (336 aa).

Cys-37 is a [4Fe-4S] cluster binding site. Residues His-66 and His-99 each contribute to the (2E)-4-hydroxy-3-methylbut-2-enyl diphosphate site. 2 residues coordinate dimethylallyl diphosphate: His-66 and His-99. 2 residues coordinate isopentenyl diphosphate: His-66 and His-99. Cys-121 provides a ligand contact to [4Fe-4S] cluster. (2E)-4-hydroxy-3-methylbut-2-enyl diphosphate is bound at residue His-149. Dimethylallyl diphosphate is bound at residue His-149. His-149 contacts isopentenyl diphosphate. Glu-151 functions as the Proton donor in the catalytic mechanism. Thr-189 provides a ligand contact to (2E)-4-hydroxy-3-methylbut-2-enyl diphosphate. Cys-219 is a binding site for [4Fe-4S] cluster. (2E)-4-hydroxy-3-methylbut-2-enyl diphosphate is bound by residues Ser-247, Ser-248, Asn-249, and Ser-292. The dimethylallyl diphosphate site is built by Ser-247, Ser-248, Asn-249, and Ser-292. Isopentenyl diphosphate contacts are provided by Ser-247, Ser-248, Asn-249, and Ser-292.

It belongs to the IspH family. [4Fe-4S] cluster serves as cofactor.

It carries out the reaction isopentenyl diphosphate + 2 oxidized [2Fe-2S]-[ferredoxin] + H2O = (2E)-4-hydroxy-3-methylbut-2-enyl diphosphate + 2 reduced [2Fe-2S]-[ferredoxin] + 2 H(+). The catalysed reaction is dimethylallyl diphosphate + 2 oxidized [2Fe-2S]-[ferredoxin] + H2O = (2E)-4-hydroxy-3-methylbut-2-enyl diphosphate + 2 reduced [2Fe-2S]-[ferredoxin] + 2 H(+). The protein operates within isoprenoid biosynthesis; dimethylallyl diphosphate biosynthesis; dimethylallyl diphosphate from (2E)-4-hydroxy-3-methylbutenyl diphosphate: step 1/1. It functions in the pathway isoprenoid biosynthesis; isopentenyl diphosphate biosynthesis via DXP pathway; isopentenyl diphosphate from 1-deoxy-D-xylulose 5-phosphate: step 6/6. Its function is as follows. Catalyzes the conversion of 1-hydroxy-2-methyl-2-(E)-butenyl 4-diphosphate (HMBPP) into a mixture of isopentenyl diphosphate (IPP) and dimethylallyl diphosphate (DMAPP). Acts in the terminal step of the DOXP/MEP pathway for isoprenoid precursor biosynthesis. This is 4-hydroxy-3-methylbut-2-enyl diphosphate reductase from Rhodococcus opacus (strain B4).